We begin with the raw amino-acid sequence, 151 residues long: MTIWVDADACPNVIKEILYRAAERMQLPLILVANQALRVPPSRFIRTLRVAAGFDVADNEIVRQCEAGDLVITADIPLAAEVLEKGAAALNPRGERYSDATIRERLTMRDFMDTLRASGVQTGGPNTLSPRDRQHFAAELDKWWLESQRKK.

The protein belongs to the UPF0178 family.

The chain is UPF0178 protein YaiI from Salmonella agona (strain SL483).